The sequence spans 217 residues: MTTGLDAELIEQGRKLFAGEWQFIWASPSIETLPPMSGLEVAFAGRSNVGKSSLINALTGRSALARTSRTPGRTQELIFFEGPKGVDVRLVDMPGYGFASAPKARIASWTSLIHQFLLGRATLARVYVLIDARHGIKDIDKTVLGALDRSAVSYQVVLTKADEVKVTEMAERIDITRTQLASHPAAFPDVLVTSSRTGNGIPELRAAMARLIGDHRR.

Positions 37–214 (SGLEVAFAGR…RAAMARLIGD (178 aa)) constitute an EngB-type G domain. GTP is bound by residues 45-52 (GRSNVGKS), 72-76 (GRTQE), 92-95 (DMPG), 159-162 (TKAD), and 193-195 (TSS). The Mg(2+) site is built by serine 52 and threonine 74.

The protein belongs to the TRAFAC class TrmE-Era-EngA-EngB-Septin-like GTPase superfamily. EngB GTPase family. Mg(2+) serves as cofactor.

In terms of biological role, necessary for normal cell division and for the maintenance of normal septation. The sequence is that of Probable GTP-binding protein EngB from Nitrobacter winogradskyi (strain ATCC 25391 / DSM 10237 / CIP 104748 / NCIMB 11846 / Nb-255).